Consider the following 319-residue polypeptide: Protein quaking-B (319 aa).

Positions Tyr-87 to Val-153 constitute a KH domain. The SH3-binding motif lies at Pro-276–Pro-279.

It belongs to the quaking family. In terms of assembly, homodimer; does not require RNA to homodimerize.

The protein resides in the cytoplasm. Its subcellular location is the nucleus. Its function is as follows. RNA reader protein, which recognizes and binds specific RNAs, thereby regulating RNA metabolic processes, such as pre-mRNA splicing, circular RNA (circRNA) formation, mRNA export, mRNA stability and/or translation. Involved in various cellular processes, such as mRNA storage into stress granules, apoptosis, interferon response, glial cell fate and development. Binds to the 5'-NACUAAY-N(1,20)-UAAY-3' RNA core sequence. Acts as a mRNA modification reader that specifically recognizes and binds mRNA transcripts modified by internal N(7)-methylguanine (m7G). Promotes the formation of circular RNAs (circRNAs): acts by binding to sites flanking circRNA-forming exons. CircRNAs are produced by back-splicing circularization of pre-mRNAs. Required to protect and promote stability of mRNAs which promotes oligodendrocyte differentiation. Acts as an important regulator of muscle development: required during early skeletal myofibril formation by regulating the accumulation of the muscle-specific tropomyosin-3 (tpm3) transcripts. In Danio rerio (Zebrafish), this protein is Protein quaking-B (qki2).